The primary structure comprises 362 residues: Probable aromatic amino acid hydroxylase (362 aa).

The Fe cation site is built by His-200 and His-205.

Belongs to the biopterin-dependent aromatic amino acid hydroxylase family. It depends on Fe(2+) as a cofactor.

This chain is Probable aromatic amino acid hydroxylase, found in Chlamydia pneumoniae (Chlamydophila pneumoniae).